Reading from the N-terminus, the 152-residue chain is MEQQLSTENNQLSSEEILGLLPHRFPFALIDRVIEHVPGKKAVALKNVTINEPQFQGHFPERPLMPGVLIVEAMAQVGGIIVTQMPDLPKGLFVFAGINNVKFRRPVVPGDQLVITCELLSIKRQRFGKVKGEAHVDGKLVCSGELMFSLVD.

Residue His-58 is part of the active site.

It belongs to the thioester dehydratase family. FabZ subfamily.

It localises to the cytoplasm. The catalysed reaction is a (3R)-hydroxyacyl-[ACP] = a (2E)-enoyl-[ACP] + H2O. Its function is as follows. Involved in unsaturated fatty acids biosynthesis. Catalyzes the dehydration of short chain beta-hydroxyacyl-ACPs and long chain saturated and unsaturated beta-hydroxyacyl-ACPs. The chain is 3-hydroxyacyl-[acyl-carrier-protein] dehydratase FabZ from Prochlorococcus marinus subsp. pastoris (strain CCMP1986 / NIES-2087 / MED4).